Reading from the N-terminus, the 618-residue chain is Chaperone protein dnaK (618 aa).

A disordered region spans residues 595 to 618 (SKTETTTPNKNEEDVIDASFSEEK).

Belongs to the heat shock protein 70 family.

The protein resides in the plastid. It localises to the cyanelle. Acts as a chaperone. The polypeptide is Chaperone protein dnaK (dnaK-A) (Cyanophora paradoxa).